We begin with the raw amino-acid sequence, 209 residues long: Large ribosomal subunit protein uL3 (209 aa).

The tract at residues 118–150 (GFQGAIKRHGQSRGPMTHGSRYHRRPGSMGPVD) is disordered.

Belongs to the universal ribosomal protein uL3 family. In terms of assembly, part of the 50S ribosomal subunit. Forms a cluster with proteins L14 and L19.

One of the primary rRNA binding proteins, it binds directly near the 3'-end of the 23S rRNA, where it nucleates assembly of the 50S subunit. This is Large ribosomal subunit protein uL3 from Bacillus pumilus (strain SAFR-032).